Consider the following 125-residue polypeptide: Small ribosomal subunit protein bS6 (125 aa).

The disordered stretch occupies residues 97 to 125 (TEASPMKAAKEERKPLAEVENNDFEDAEE). The segment covering 104-113 (AAKEERKPLA) has biased composition (basic and acidic residues). Residues 116 to 125 (ENNDFEDAEE) are compositionally biased toward acidic residues.

Belongs to the bacterial ribosomal protein bS6 family.

Its function is as follows. Binds together with bS18 to 16S ribosomal RNA. This Haemophilus influenzae (strain PittEE) protein is Small ribosomal subunit protein bS6.